Here is a 2596-residue protein sequence, read N- to C-terminus: Cadherin EGF LAG seven-pass G-type receptor fmi-1 (2596 aa).

The first 22 residues, 1–22 (MMLDRIMFLLFFILSLVIGSFS), serve as a signal peptide directing secretion. Residues 23–2229 (EYLDDKYYST…IVRVAQMDNM (2207 aa)) are Extracellular-facing. Cadherin domains are found at residues 166 to 270 (QQEK…SPIF), 271 to 375 (EKDS…APVF), 376 to 479 (ASDS…APTL), 480 to 581 (IAAQ…APTF), 582 to 682 (DKKE…APYF), 683 to 784 (NDHP…SPQF), 785 to 892 (TSSS…APTF), and 893 to 1000 (EQLS…KPAL). Residues Asn-381, Asn-387, Asn-562, Asn-587, Asn-765, and Asn-824 are each glycosylated (N-linked (GlcNAc...) asparagine). N-linked (GlcNAc...) asparagine glycosylation is found at Asn-1030 and Asn-1263. Residues 1251 to 1287 (RIDECYRGRCSNNSTCVAFENTYQCECKPGWIGRHCE) form the EGF-like 1 domain. Cystine bridges form between Cys-1255/Cys-1266, Cys-1260/Cys-1275, Cys-1277/Cys-1286, Cys-1497/Cys-1526, Cys-1533/Cys-1546, Cys-1540/Cys-1555, Cys-1557/Cys-1567, Cys-1709/Cys-1732, Cys-1738/Cys-1750, Cys-1744/Cys-1759, Cys-1761/Cys-1770, and Cys-1780/Cys-1785. The Laminin G-like 1 domain occupies 1333–1526 (SVSFDGEGLL…HKVGQVHEGC (194 aa)). The region spanning 1529–1568 (RKDFCSTSDGQCSATSKCVNRWGGRICSCPQSVHSTGECV) is the EGF-like 2 domain. One can recognise a Laminin G-like 2 domain in the interval 1577–1732 (RGHSLFEEES…KKKGKTRAGC (156 aa)). EGF-like domains are found at residues 1734–1771 (VPNR…DTCL) and 1776–1808 (VANV…KNCQ). Residue Asn-1789 is glycosylated (N-linked (GlcNAc...) asparagine). A disulfide bridge connects residues Cys-1798 and Cys-1807. N-linked (GlcNAc...) asparagine glycosylation is found at Asn-1965, Asn-1992, Asn-2152, Asn-2195, and Asn-2228. The GAIN-B domain maps to 2054-2219 (EYSTLISKLW…TMFVNDQSSS (166 aa)). An intrachain disulfide couples Cys-2174 to Cys-2201. A GPS region spans residues 2174-2219 (CVRFDEKSGTWTARGAALIGLNLTHAACEYNRIGVFTMFVNDQSSS). A helical membrane pass occupies residues 2230 to 2250 (TSPAIAGVALFLCFLSILLTL). Residues 2251–2261 (SRRSLKTHSVR) lie on the Cytoplasmic side of the membrane. A helical transmembrane segment spans residues 2262-2282 (IGFILFFAINILNLFFVHKTA). Topologically, residues 2283-2292 (INQAYCPVRN) are extracellular. A helical transmembrane segment spans residues 2293-2313 (AMLSFTSSAPFAWLFLYGLYI). Over 2314–2326 (YRMLADGSSSPSL) the chain is Cytoplasmic. A helical membrane pass occupies residues 2327 to 2347 (TTSLLVGIVFPCLISFTTFFV). Residues 2348–2356 (TDQCSLSPH) are Extracellular-facing. A helical membrane pass occupies residues 2357–2377 (LWLFWCIILPIGLFLLLSFYA). Topologically, residues 2378-2401 (AATSVLVSLHKKYDVFVAKYNVKR) are cytoplasmic. A helical membrane pass occupies residues 2402 to 2422 (AVFQHFILTIFTLGMTLTGLF). Over 2423–2437 (ANQLPLPMEIMEISQ) the chain is Extracellular. The chain crosses the membrane as a helical span at residues 2438–2458 (SIIYLIAALVIFLWCVCDITT). At 2459 to 2596 (KASDSNPSMW…KNTTSTFNRE (138 aa)) the chain is on the cytoplasmic side.

The protein belongs to the G-protein coupled receptor 2 family. LN-TM7 subfamily. In terms of tissue distribution, expressed in a region of neuropil around the nerve ring and the ventral cord (at protein level). Expressed in the head, tail, ventral cord, nerve ring and neurons including HSN neurons. Expressed in DA, VA, and VB and weakly in the DB cholinergic neurons. Not expressed in ventral D-type GABAergic motorneurons.

Its subcellular location is the cell membrane. The protein resides in the cell projection. The protein localises to the axon. It localises to the dendrite. In terms of biological role, during ventral cord development, required for axon fasciculation and navigation, mediating both pioneer and follower axon extension, guidance and track formation. Acts in CEPsh glia and SubL neurons to guide follower axons into the nerve ring. Promotes motorneuron development by positively regulating the extension of the anterior neurite of ventral D-type GABAergic motorneurons along the anterior-posterior axis of the ventral nerve cord. Plays a role in synaptogenesis by regulating synaptic vesicle accumulation at GABAergic and cholinergic neuromuscular junctions. This chain is Cadherin EGF LAG seven-pass G-type receptor fmi-1, found in Caenorhabditis elegans.